Here is a 178-residue protein sequence, read N- to C-terminus: Ribosome maturation factor RimM (178 aa).

Residues 99-178 (EGDYYWHDLI…TIEVDWDAGF (80 aa)) form the PRC barrel domain.

It belongs to the RimM family. In terms of assembly, binds ribosomal protein uS19.

It is found in the cytoplasm. An accessory protein needed during the final step in the assembly of 30S ribosomal subunit, possibly for assembly of the head region. Essential for efficient processing of 16S rRNA. May be needed both before and after RbfA during the maturation of 16S rRNA. It has affinity for free ribosomal 30S subunits but not for 70S ribosomes. The polypeptide is Ribosome maturation factor RimM (Haemophilus influenzae (strain ATCC 51907 / DSM 11121 / KW20 / Rd)).